The chain runs to 1036 residues: Mitogen-activated protein kinase kinase kinase 21 (1036 aa).

The interval 1 to 36 (MALRGAAGATDTPVSSAGGAPGGSASSSSTSSGGSA) is disordered. Positions 15–36 (SSAGGAPGGSASSSSTSSGGSA) are enriched in low complexity. Positions 38 to 102 (AGAGLWAALY…PANYVAPCRP (65 aa)) constitute an SH3 domain. Residues 124–401 (LELKELIGAG…ALILEQLTAI (278 aa)) enclose the Protein kinase domain. ATP is bound by residues 130-138 (IGAGGFGQV) and K151. The active-site Proton acceptor is the D263. The residue at position 299 (T299) is a Phosphothreonine; by autocatalysis. Residue S303 is modified to Phosphoserine; by autocatalysis and MAP4K1. 2 leucine-zipper regions span residues 425 to 446 (IQQM…EEEL) and 460 to 481 (LKRR…ELNI). Residues 517 to 551 (SDFQHKITVQASPNLDKRRSLNSSSSSPPSSPTMM) are disordered. Phosphoserine is present on residues S528, S543, and S547. Residue T592 is modified to Phosphothreonine. S614 is subject to Phosphoserine. Residues 748 to 763 (AEEPLPKEEKKKREGI) show a composition bias toward basic and acidic residues. 2 disordered regions span residues 748 to 791 (AEEP…SSPP) and 923 to 954 (PHSH…RSRS).

Belongs to the protein kinase superfamily. STE Ser/Thr protein kinase family. MAP kinase kinase kinase subfamily. As to quaternary structure, homodimer. Interacts with TLR4. Mg(2+) serves as cofactor. In terms of processing, autophosphorylation on serine and threonine residues within the activation loop plays a role in enzyme activation.

It carries out the reaction L-seryl-[protein] + ATP = O-phospho-L-seryl-[protein] + ADP + H(+). The catalysed reaction is L-threonyl-[protein] + ATP = O-phospho-L-threonyl-[protein] + ADP + H(+). With respect to regulation, homodimerization via the leucine zipper domains is required for autophosphorylation and subsequent activation. Its function is as follows. Negative regulator of TLR4 signaling. Does not activate JNK1/MAPK8 pathway, p38/MAPK14, nor ERK2/MAPK1 pathways. The polypeptide is Mitogen-activated protein kinase kinase kinase 21 (Homo sapiens (Human)).